A 508-amino-acid polypeptide reads, in one-letter code: ATP synthase subunit alpha, chloroplastic (508 aa).

Residue 171 to 178 (GDRQTGKT) coordinates ATP.

The protein belongs to the ATPase alpha/beta chains family. As to quaternary structure, F-type ATPases have 2 components, CF(1) - the catalytic core - and CF(0) - the membrane proton channel. CF(1) has five subunits: alpha(3), beta(3), gamma(1), delta(1), epsilon(1). CF(0) has four main subunits: a, b, b' and c.

The protein resides in the plastid. It is found in the chloroplast thylakoid membrane. It carries out the reaction ATP + H2O + 4 H(+)(in) = ADP + phosphate + 5 H(+)(out). Its function is as follows. Produces ATP from ADP in the presence of a proton gradient across the membrane. The alpha chain is a regulatory subunit. The protein is ATP synthase subunit alpha, chloroplastic of Gnetum parvifolium (Small-leaved jointfir).